The chain runs to 512 residues: NAD-dependent deacetylase sir2A (512 aa).

The segment at 7–110 (IECIHLKDEY…EILENIKSSN (104 aa)) adopts a UBP-type zinc-finger fold. Zn(2+) contacts are provided by Cys9, His11, Cys34, Cys37, Cys46, Cys49, Cys54, His61, His65, His71, Cys84, and Cys87. Over residues 113-122 (DKIVPKKDQK) the composition is skewed to basic and acidic residues. Residues 113–196 (DKIVPKKDQK…DESSSEGEES (84 aa)) are disordered. Residues 130-175 (VVPSASITTSSTTTSISKQTTVNNTTTTSSSSTTTTTTTTSTTINN) are compositionally biased toward low complexity. The segment covering 176–195 (NEEEEESESETDESSSEGEE) has biased composition (acidic residues). A Deacetylase sirtuin-type domain is found at 231-503 (CVLKKPTIEE…LDLIKLLGWE (273 aa)). His361 acts as the Proton acceptor in catalysis. 4 residues coordinate Zn(2+): Cys369, Cys372, Cys393, and Cys399.

It belongs to the sirtuin family. It depends on Zn(2+) as a cofactor.

The catalysed reaction is N(6)-acetyl-L-lysyl-[protein] + NAD(+) + H2O = 2''-O-acetyl-ADP-D-ribose + nicotinamide + L-lysyl-[protein]. Functionally, NAD-dependent deacetylase, which plays an important role in the regulation of transcriptional repression. The polypeptide is NAD-dependent deacetylase sir2A (sir2A) (Dictyostelium discoideum (Social amoeba)).